We begin with the raw amino-acid sequence, 223 residues long: Guanylate kinase (223 aa).

The Guanylate kinase-like domain maps to 6–183 (GRLFVMTGAS…AVADFLAILT (178 aa)). An ATP-binding site is contributed by 13–20 (GASGVGKG).

It belongs to the guanylate kinase family.

It localises to the cytoplasm. The enzyme catalyses GMP + ATP = GDP + ADP. In terms of biological role, essential for recycling GMP and indirectly, cGMP. The protein is Guanylate kinase of Thermus thermophilus (strain ATCC 27634 / DSM 579 / HB8).